The chain runs to 85 residues: UPF0335 protein BH15140 (85 aa).

Belongs to the UPF0335 family.

This is UPF0335 protein BH15140 from Bartonella henselae (strain ATCC 49882 / DSM 28221 / CCUG 30454 / Houston 1) (Rochalimaea henselae).